We begin with the raw amino-acid sequence, 179 residues long: Large ribosomal subunit protein uL16m (179 aa).

The protein belongs to the universal ribosomal protein uL16 family. In terms of assembly, component of the mitochondrial ribosome large subunit.

It is found in the mitochondrion. The protein is Large ribosomal subunit protein uL16m (RPL16) of Arabidopsis thaliana (Mouse-ear cress).